A 301-amino-acid polypeptide reads, in one-letter code: Homoserine kinase (301 aa).

Residue 81–91 (RPSSGLGSSAA) coordinates ATP.

The protein belongs to the GHMP kinase family. Homoserine kinase subfamily.

It is found in the cytoplasm. The enzyme catalyses L-homoserine + ATP = O-phospho-L-homoserine + ADP + H(+). It functions in the pathway amino-acid biosynthesis; L-threonine biosynthesis; L-threonine from L-aspartate: step 4/5. Functionally, catalyzes the ATP-dependent phosphorylation of L-homoserine to L-homoserine phosphate. This Halobacterium salinarum (strain ATCC 29341 / DSM 671 / R1) protein is Homoserine kinase.